Consider the following 253-residue polypeptide: Patatin-like phospholipase domain-containing protein 4 (253 aa).

Residues 6-176 enclose the PNPLA domain; it reads LSFAACGFLG…TNALPILPVG (171 aa). Residues 41–45 carry the GXSXG motif; it reads GASAG. The Nucleophile role is filled by Ser-43. The active-site Proton acceptor is the Asp-163. Residues 163-165 carry the DGA/G motif; that stretch reads DGG.

In terms of tissue distribution, expressed in all tissues examined, including heart, brain, placenta, lung, liver, muscle, kidney, pancreas and spleen.

The protein localises to the mitochondrion. The enzyme catalyses a triacylglycerol + H2O = a diacylglycerol + a fatty acid + H(+). It carries out the reaction a 1,2-diacyl-sn-glycero-3-phosphocholine + H2O = a 1-acyl-sn-glycero-3-phosphocholine + a fatty acid + H(+). The catalysed reaction is an all-trans-retinyl ester + H2O = all-trans-retinol + a fatty acid + H(+). It catalyses the reaction 2 a 1-acylglycerol = a 1,2-diacylglycerol + glycerol. The enzyme catalyses a 1-acylglycerol + a 1,2-diacylglycerol = a triacylglycerol + glycerol. It carries out the reaction a 1-acylglycerol + a 1,3-diacylglycerol = a triacylglycerol + glycerol. The catalysed reaction is a triacylglycerol + H2O = a 1,2-diacylglycerol + a fatty acid + H(+). It catalyses the reaction a triacylglycerol + H2O = a 1,3-diacylglycerol + a fatty acid + H(+). The enzyme catalyses a triacylglycerol + all-trans-retinol = an all-trans-retinyl ester + a diacylglycerol. It carries out the reaction 2 1-(9Z-octadecenoyl)-glycerol = 1,2-di-(9Z-octadecenoyl)-glycerol + glycerol. The catalysed reaction is 1-(9Z-octadecenoyl)-glycerol + 1,2-di-(9Z-octadecenoyl)-glycerol = 1,2,3-tri-(9Z-octadecenoyl)-glycerol + glycerol. It catalyses the reaction 1-(9Z-octadecenoyl)-glycerol + 1,3-di-(9Z-octadecenoyl)-glycerol = 1,2,3-tri-(9Z-octadecenoyl)-glycerol + glycerol. The enzyme catalyses 1,2-di-(9Z-octadecenoyl)-glycerol + (9Z)-octadecenoate + H(+) = 1,2,3-tri-(9Z-octadecenoyl)-glycerol + H2O. It carries out the reaction 1,2,3-tri-(9Z-octadecenoyl)-glycerol + H2O = 1,3-di-(9Z-octadecenoyl)-glycerol + (9Z)-octadecenoate + H(+). The catalysed reaction is all-trans-retinyl hexadecanoate + H2O = all-trans-retinol + hexadecanoate + H(+). It catalyses the reaction 1,2,3-tri-(9Z-octadecenoyl)-glycerol + all-trans-retinol = all-trans-retinyl 9Z-octadecenoate + di-(9Z)-octadecenoylglycerol. Its activity is regulated as follows. The triglyceride lipase activity is inhibited by BEL ((E)-6-(bromomethylene)-3-(1-naphthalenyl)-2H-tetrahydropyran-2-one), a suicide substrate inhibitor. Has abundant triacylglycerol lipase activity. Transfers fatty acid from triglyceride to retinol, hydrolyzes retinylesters, and generates 1,3-diacylglycerol from triglycerides. Additionally possesses acylglycerol transacylase and phospholipase A2 activities. In Homo sapiens (Human), this protein is Patatin-like phospholipase domain-containing protein 4.